The sequence spans 407 residues: MPRGHKSKLRTCEKRQETNGQPQGLTGPQATAEKQEESHSSSSSSRACLGDCRRSSDASIPQESQGVSPTGSPDAVVSYSKSDVAANGQDEKSPSTSRDASVPQESQGASPTGSPDAGVSGSKYDVAANGQDEKSPSTSHDVSVPQESQGASPTGSPDAGVSGSKYDVAAEGEDEESVSASQKAIIFKRLSKDAVKKKACTLAQFLQKKFEKKESILKADMLKCVRREYKPYFPQILNRTSQHLVVAFGVELKEMDSSGESYTLVSKLGLPSEGILSGDNALPKSGLLMSLLVVIFMNGNCATEEEVWEFLGLLGIYDGILHSIYGDARKIITEDLVQDKYVVYRQVCNSDPPCYEFLWGPRAYAETTKMRVLRVLADSSNTSPGLYPHLYEDALIDEVERALRLRA.

The segment at 1 to 175 (MPRGHKSKLR…YDVAAEGEDE (175 aa)) is disordered. Composition is skewed to polar residues over residues 18–29 (TNGQPQGLTGPQ), 57–71 (DASI…SPTG), 94–113 (PSTS…SPTG), and 136–155 (PSTS…SPTG). One can recognise an MAGE domain in the interval 195-394 (VKKKACTLAQ…GLYPHLYEDA (200 aa)).

Expressed in testis. Not expressed in other normal tissues, but is expressed in tumors of different histological origins.

The protein is Melanoma-associated antigen B6 (MAGEB6) of Homo sapiens (Human).